The sequence spans 483 residues: Altronate oxidoreductase (483 aa).

18–29 (IIQFGEGNFLRA) contacts NAD(+).

It belongs to the mannitol dehydrogenase family. UxaB subfamily.

The enzyme catalyses D-altronate + NAD(+) = keto-D-tagaturonate + NADH + H(+). Its pathway is carbohydrate metabolism; pentose and glucuronate interconversion. The sequence is that of Altronate oxidoreductase from Shigella flexneri serotype 5b (strain 8401).